We begin with the raw amino-acid sequence, 237 residues long: Type II secretion system protein J (237 aa).

The propeptide at 1–6 is leader sequence; the sequence is MRLQRG. At F7 the chain carries N-methylphenylalanine. Residues 7–29 form a helical membrane-spanning segment; the sequence is FTLLELLIAIAIFALLALATYRM. The interval 203–237 is disordered; it reads PLKQDQPQGQPGGENGENGEGGVPQPPEGMPGAPE. Over residues 212–224 the composition is skewed to gly residues; it reads QPGGENGENGEGG. The segment covering 226–237 has biased composition (pro residues); sequence PQPPEGMPGAPE.

Belongs to the GSP J family. In terms of assembly, type II secretion is composed of four main components: the outer membrane complex, the inner membrane complex, the cytoplasmic secretion ATPase and the periplasm-spanning pseudopilus. Forms the tip of the type II pseudopilus by interacting with XcpV, XcpU and XcpX. Interacts with core component XcpT. Post-translationally, cleaved by prepilin peptidase. Methylated by prepilin peptidase at the amino group of the N-terminal phenylalanine once the leader sequence is cleaved by prepilin peptidase.

It is found in the cell inner membrane. In terms of biological role, component of the type II secretion system required for the energy-dependent secretion of extracellular factors such as proteases and toxins from the periplasm. Part of the pseudopilus tip complex that is critical for the recognition and binding of secretion substrates. Type II pseudopilus confers increased bacterial adhesive capabilities. The polypeptide is Type II secretion system protein J (xcpW) (Pseudomonas aeruginosa (strain ATCC 15692 / DSM 22644 / CIP 104116 / JCM 14847 / LMG 12228 / 1C / PRS 101 / PAO1)).